The following is a 338-amino-acid chain: tRNA N6-adenosine threonylcarbamoyltransferase (338 aa).

Fe cation contacts are provided by histidine 111 and histidine 115. Substrate-binding positions include 134–138 (LLSGG), aspartate 167, glycine 180, and asparagine 275. Aspartate 304 serves as a coordination point for Fe cation.

Belongs to the KAE1 / TsaD family. Requires Fe(2+) as cofactor.

The protein resides in the cytoplasm. The enzyme catalyses L-threonylcarbamoyladenylate + adenosine(37) in tRNA = N(6)-L-threonylcarbamoyladenosine(37) in tRNA + AMP + H(+). Its function is as follows. Required for the formation of a threonylcarbamoyl group on adenosine at position 37 (t(6)A37) in tRNAs that read codons beginning with adenine. Is involved in the transfer of the threonylcarbamoyl moiety of threonylcarbamoyl-AMP (TC-AMP) to the N6 group of A37, together with TsaE and TsaB. TsaD likely plays a direct catalytic role in this reaction. The chain is tRNA N6-adenosine threonylcarbamoyltransferase from Leptospira borgpetersenii serovar Hardjo-bovis (strain JB197).